The chain runs to 191 residues: Transcriptional activator GvpE1 (191 aa).

A disordered region spans residues Ser-31 to Thr-51. Lys-140–Arg-145 contributes to the DNA binding site. The segment at Glu-150–Gln-181 is leucine-zipper.

As to quaternary structure, interacts with GvpD.

It is found in the cytoplasm. With respect to regulation, the amount of protein that accumulates is controlled by GvpD; GvpD causes a reduction in the amount of GvpE, preventing accumulation of excessive amounts of gas vesicles. Functionally, plays a regulatory role in gas vesicle synthesis, activates transcription of the gvpA operon, and probably of the gvpD operon. Gas vesicles are hollow, gas filled proteinaceous nanostructures found in several microbial planktonic microorganisms. They allow positioning of halobacteria at the optimal depth for growth in the poorly aerated, shallow brine pools of their habitat. Its function is as follows. Expression of a 9.5 kb p-vac DNA fragment containing 2 divergently transcribed regions (gvpD-gvpE-gvpF-gvpG-gvpH-gvpI-gvpJ-gvpK-gvpL-gvpM and gvpA-gvpC-gvpN-gvpO) allows H.volcanii to produce gas vesicles. A similar region restores gas vesicle production in H.halobium without the p-vac locus, but it still has the c-vac locus. The protein is Transcriptional activator GvpE1 (gvpE11) of Halobacterium salinarum (strain ATCC 700922 / JCM 11081 / NRC-1) (Halobacterium halobium).